Here is a 153-residue protein sequence, read N- to C-terminus: Glucose-6-phosphate 1-dehydrogenase (153 aa).

Arg-21 and Lys-120 together coordinate NADP(+). Lys-120 contacts D-glucose 6-phosphate.

Belongs to the glucose-6-phosphate dehydrogenase family.

The protein resides in the cytoplasm. Its subcellular location is the cytosol. It carries out the reaction D-glucose 6-phosphate + NADP(+) = 6-phospho-D-glucono-1,5-lactone + NADPH + H(+). Its pathway is carbohydrate degradation; pentose phosphate pathway; D-ribulose 5-phosphate from D-glucose 6-phosphate (oxidative stage): step 1/3. Functionally, cytosolic glucose-6-phosphate dehydrogenase that catalyzes the first and rate-limiting step of the oxidative branch within the pentose phosphate pathway/shunt, an alternative route to glycolysis for the dissimilation of carbohydrates and a major source of reducing power and metabolic intermediates for fatty acid and nucleic acid biosynthetic processes. The polypeptide is Glucose-6-phosphate 1-dehydrogenase (Zw) (Drosophila simulans (Fruit fly)).